The chain runs to 49 residues: Large ribosomal subunit protein bL33 (49 aa).

The protein belongs to the bacterial ribosomal protein bL33 family.

The polypeptide is Large ribosomal subunit protein bL33 (Lactiplantibacillus plantarum (strain ATCC BAA-793 / NCIMB 8826 / WCFS1) (Lactobacillus plantarum)).